The primary structure comprises 236 residues: MRFAAPLVRATLIKRYKRFMADVRFDDGTEVTAHVANSGAMLGTAEPGMEVWLSPASNPERKLKWNWELVTVDGHLVGVNTAHPNGIVAEAVAAGQVAELAGYDSIRREVKYGVNSRIDLLLEAEGRPKCWVEVKNVHLKRGDWAEFPDAVTVRGTKHLAELTDRVRAGERAVMVYLVQREDCAGFRPAADIDPVYARTLAQATRDGVEAICYTCRLAPDGIDLGAPLTMDLTERI.

Belongs to the SfsA family.

This Paramagnetospirillum magneticum (strain ATCC 700264 / AMB-1) (Magnetospirillum magneticum) protein is Sugar fermentation stimulation protein homolog.